A 264-amino-acid polypeptide reads, in one-letter code: Thiazole synthase (264 aa).

K106 serves as the catalytic Schiff-base intermediate with DXP. 1-deoxy-D-xylulose 5-phosphate-binding positions include G167, 193 to 194 (AG), and 215 to 216 (NT).

It belongs to the ThiG family. Homotetramer. Forms heterodimers with either ThiH or ThiS.

Its subcellular location is the cytoplasm. The enzyme catalyses [ThiS sulfur-carrier protein]-C-terminal-Gly-aminoethanethioate + 2-iminoacetate + 1-deoxy-D-xylulose 5-phosphate = [ThiS sulfur-carrier protein]-C-terminal Gly-Gly + 2-[(2R,5Z)-2-carboxy-4-methylthiazol-5(2H)-ylidene]ethyl phosphate + 2 H2O + H(+). The protein operates within cofactor biosynthesis; thiamine diphosphate biosynthesis. Functionally, catalyzes the rearrangement of 1-deoxy-D-xylulose 5-phosphate (DXP) to produce the thiazole phosphate moiety of thiamine. Sulfur is provided by the thiocarboxylate moiety of the carrier protein ThiS. In vitro, sulfur can be provided by H(2)S. The chain is Thiazole synthase from Xanthomonas euvesicatoria pv. vesicatoria (strain 85-10) (Xanthomonas campestris pv. vesicatoria).